Consider the following 91-residue polypeptide: Late embryogenesis abundant protein EMB564 (91 aa).

Composition is skewed to basic and acidic residues over residues 1-19 (MASG…REGE) and 32-51 (EAQE…RREQ). Positions 1-91 (MASGQESRKE…VTIDESKFTK (91 aa)) are disordered.

The protein belongs to the small hydrophilic plant seed protein family.

LEA proteins are late embryonic proteins abundant in higher plant seed embryos. They may play an essential role in seed survival and in controlling water exchanges during seed desiccation and imbibition. The polypeptide is Late embryogenesis abundant protein EMB564 (Zea mays (Maize)).